A 415-amino-acid polypeptide reads, in one-letter code: Translation initiation factor 2 subunit gamma (415 aa).

The region spanning 7–206 (QPEVNIGVVG…GIEEYIKTPY (200 aa)) is the tr-type G domain. Positions 16–23 (GHVDHGKT) are G1. Asp19, Thr23, Gly44, and Thr46 together coordinate Mg(2+). Residue 19–24 (DHGKTT) coordinates GTP. A G2 region spans residues 44–48 (GMTIK). Residues Cys59, Cys62, Cys74, and Cys77 each contribute to the Zn(2+) site. The G3 stretch occupies residues 93 to 96 (DAPG). GTP-binding positions include 149-152 (NKVD) and 184-186 (SAL). Residues 149-152 (NKVD) are G4. The tract at residues 184-186 (SAL) is G5.

The protein belongs to the TRAFAC class translation factor GTPase superfamily. Classic translation factor GTPase family. EIF2G subfamily. In terms of assembly, heterotrimer composed of an alpha, a beta and a gamma chain. It depends on Mg(2+) as a cofactor.

The catalysed reaction is GTP + H2O = GDP + phosphate + H(+). EIF-2 functions in the early steps of protein synthesis by forming a ternary complex with GTP and initiator tRNA. This chain is Translation initiation factor 2 subunit gamma, found in Saccharolobus solfataricus (strain ATCC 35092 / DSM 1617 / JCM 11322 / P2) (Sulfolobus solfataricus).